A 112-amino-acid polypeptide reads, in one-letter code: cAMP-regulated phosphoprotein 19 (112 aa).

Met-1 carries the post-translational modification N-acetylmethionine. The span at 1–11 shows a compositional bias: low complexity; the sequence is MSAEVPEAASA. Residues 1-49 form a disordered region; the sequence is MSAEVPEAASAEEQKEMEDKVTSPEKAEEAKLKARYPHLGQKPGGSDFL. N-acetylserine is present on Ser-2. 2 positions are modified to phosphoserine: Ser-2 and Ser-23. Basic and acidic residues predominate over residues 12-32; sequence EEQKEMEDKVTSPEKAEEAKL. 2 positions are modified to phosphoserine; by GWL: Ser-62 and Ser-104. Residues 73–112 form a disordered region; it reads KNKQLPTAAPDKTEVTGDHIPTPQDLPQRKPSLVASKLAG. At Ser-104 the chain carries Phosphoserine; by PKA. Lys-109 bears the N6-acetyllysine mark.

This sequence belongs to the endosulfine family. Interacts (when phosphorylated at Ser-62) with PPP2R2D. Interacts with SNCA. Interacts with PPP2R2A; the interaction is direct and this interaction inhibits PP2A activity. Post-translationally, phosphorylation at Ser-62 by MASTL/GWL during mitosis is essential for interaction with PPP2R2D (PR55-delta) and subsequent inactivation of PP2A. Phosphorylated by PKA.

It is found in the cytoplasm. In terms of biological role, protein phosphatase inhibitor that specifically inhibits protein phosphatase 2A (PP2A) during mitosis. Inhibition of PP2A is enhanced when ARPP19 is phosphorylated. When phosphorylated at Ser-62 during mitosis, specifically interacts with PPP2R2D (PR55-delta) and inhibits its activity, leading to inactivation of PP2A, an essential condition to keep cyclin-B1-CDK1 activity high during M phase. May indirectly enhance GAP-43 expression. The chain is cAMP-regulated phosphoprotein 19 (ARPP19) from Homo sapiens (Human).